The following is a 292-amino-acid chain: Ribosomal RNA small subunit methyltransferase A (292 aa).

S-adenosyl-L-methionine is bound by residues asparagine 29, leucine 31, glycine 56, glutamate 77, aspartate 102, and asparagine 127.

The protein belongs to the class I-like SAM-binding methyltransferase superfamily. rRNA adenine N(6)-methyltransferase family. RsmA subfamily.

The protein resides in the cytoplasm. It carries out the reaction adenosine(1518)/adenosine(1519) in 16S rRNA + 4 S-adenosyl-L-methionine = N(6)-dimethyladenosine(1518)/N(6)-dimethyladenosine(1519) in 16S rRNA + 4 S-adenosyl-L-homocysteine + 4 H(+). Specifically dimethylates two adjacent adenosines (A1518 and A1519) in the loop of a conserved hairpin near the 3'-end of 16S rRNA in the 30S particle. May play a critical role in biogenesis of 30S subunits. This is Ribosomal RNA small subunit methyltransferase A from Bacillus subtilis (strain 168).